The primary structure comprises 405 residues: Intraflagellar transport protein 57 homolog (405 aa).

A coiled-coil region spans residues Glu-252 to Leu-380.

The protein belongs to the IFT57 family.

Its subcellular location is the cytoplasm. It is found in the cytoskeleton. The protein localises to the cilium basal body. Functionally, required for the formation of cilia. The chain is Intraflagellar transport protein 57 homolog from Drosophila melanogaster (Fruit fly).